The primary structure comprises 341 residues: tRNA (cytidine(56)-2'-O)-methyltransferase (341 aa).

S-adenosyl-L-methionine contacts are provided by residues Leu79 and 104 to 108 (GAEKV). One can recognise an HD domain in the interval 187–294 (IIRHVETVYK…VAHADNLVSM (108 aa)).

Belongs to the aTrm56 family. As to quaternary structure, homodimer.

It is found in the cytoplasm. The enzyme catalyses cytidine(56) in tRNA + S-adenosyl-L-methionine = 2'-O-methylcytidine(56) in tRNA + S-adenosyl-L-homocysteine + H(+). Specifically catalyzes the AdoMet-dependent 2'-O-ribose methylation of cytidine at position 56 in tRNAs. The protein is tRNA (cytidine(56)-2'-O)-methyltransferase of Picrophilus torridus (strain ATCC 700027 / DSM 9790 / JCM 10055 / NBRC 100828 / KAW 2/3).